Reading from the N-terminus, the 330-residue chain is DNA-directed RNA polymerase subunit alpha (330 aa).

The interval methionine 1–arginine 236 is alpha N-terminal domain (alpha-NTD). The interval phenylalanine 250–asparagine 330 is alpha C-terminal domain (alpha-CTD).

It belongs to the RNA polymerase alpha chain family. In terms of assembly, homodimer. The RNAP catalytic core consists of 2 alpha, 1 beta, 1 beta' and 1 omega subunit. When a sigma factor is associated with the core the holoenzyme is formed, which can initiate transcription.

The catalysed reaction is RNA(n) + a ribonucleoside 5'-triphosphate = RNA(n+1) + diphosphate. Functionally, DNA-dependent RNA polymerase catalyzes the transcription of DNA into RNA using the four ribonucleoside triphosphates as substrates. The protein is DNA-directed RNA polymerase subunit alpha of Blochmanniella pennsylvanica (strain BPEN).